A 282-amino-acid polypeptide reads, in one-letter code: Phosphatidylserine decarboxylase proenzyme (282 aa).

Catalysis depends on charge relay system; for autoendoproteolytic cleavage activity residues Asp-88, His-145, and Ser-248. Ser-248 serves as the catalytic Schiff-base intermediate with substrate; via pyruvic acid; for decarboxylase activity. At Ser-248 the chain carries Pyruvic acid (Ser); by autocatalysis.

It belongs to the phosphatidylserine decarboxylase family. PSD-B subfamily. Prokaryotic type I sub-subfamily. As to quaternary structure, heterodimer of a large membrane-associated beta subunit and a small pyruvoyl-containing alpha subunit. Requires pyruvate as cofactor. In terms of processing, is synthesized initially as an inactive proenzyme. Formation of the active enzyme involves a self-maturation process in which the active site pyruvoyl group is generated from an internal serine residue via an autocatalytic post-translational modification. Two non-identical subunits are generated from the proenzyme in this reaction, and the pyruvate is formed at the N-terminus of the alpha chain, which is derived from the carboxyl end of the proenzyme. The autoendoproteolytic cleavage occurs by a canonical serine protease mechanism, in which the side chain hydroxyl group of the serine supplies its oxygen atom to form the C-terminus of the beta chain, while the remainder of the serine residue undergoes an oxidative deamination to produce ammonia and the pyruvoyl prosthetic group on the alpha chain. During this reaction, the Ser that is part of the protease active site of the proenzyme becomes the pyruvoyl prosthetic group, which constitutes an essential element of the active site of the mature decarboxylase.

The protein resides in the cell membrane. The enzyme catalyses a 1,2-diacyl-sn-glycero-3-phospho-L-serine + H(+) = a 1,2-diacyl-sn-glycero-3-phosphoethanolamine + CO2. The protein operates within phospholipid metabolism; phosphatidylethanolamine biosynthesis; phosphatidylethanolamine from CDP-diacylglycerol: step 2/2. Catalyzes the formation of phosphatidylethanolamine (PtdEtn) from phosphatidylserine (PtdSer). The protein is Phosphatidylserine decarboxylase proenzyme of Dechloromonas aromatica (strain RCB).